The primary structure comprises 39 residues: Photosystem II reaction center protein L (39 aa).

Residues 18–38 form a helical membrane-spanning segment; the sequence is SLYLGLLLVFVTGVLFSSYFF.

The protein belongs to the PsbL family. PSII is composed of 1 copy each of membrane proteins PsbA, PsbB, PsbC, PsbD, PsbE, PsbF, PsbH, PsbI, PsbJ, PsbK, PsbL, PsbM, PsbT, PsbX, PsbY, PsbZ, Psb30/Ycf12, peripheral proteins PsbO, CyanoQ (PsbQ), PsbU, PsbV and a large number of cofactors. It forms dimeric complexes.

It localises to the cellular thylakoid membrane. Its function is as follows. One of the components of the core complex of photosystem II (PSII). PSII is a light-driven water:plastoquinone oxidoreductase that uses light energy to abstract electrons from H(2)O, generating O(2) and a proton gradient subsequently used for ATP formation. It consists of a core antenna complex that captures photons, and an electron transfer chain that converts photonic excitation into a charge separation. This subunit is found at the monomer-monomer interface and is required for correct PSII assembly and/or dimerization. The chain is Photosystem II reaction center protein L from Synechococcus sp. (strain RCC307).